Consider the following 505-residue polypeptide: Lysine--tRNA ligase (505 aa).

Mg(2+) contacts are provided by Glu415 and Glu422.

The protein belongs to the class-II aminoacyl-tRNA synthetase family. In terms of assembly, homodimer. Requires Mg(2+) as cofactor.

It is found in the cytoplasm. It catalyses the reaction tRNA(Lys) + L-lysine + ATP = L-lysyl-tRNA(Lys) + AMP + diphosphate. The chain is Lysine--tRNA ligase from Serratia proteamaculans (strain 568).